Here is a 445-residue protein sequence, read N- to C-terminus: Phosphoglucosamine mutase (445 aa).

The active-site Phosphoserine intermediate is the Ser-102. The Mg(2+) site is built by Ser-102, Asp-241, Asp-243, and Asp-245. Ser-102 is subject to Phosphoserine.

It belongs to the phosphohexose mutase family. Mg(2+) serves as cofactor. Post-translationally, activated by phosphorylation.

The enzyme catalyses alpha-D-glucosamine 1-phosphate = D-glucosamine 6-phosphate. Catalyzes the conversion of glucosamine-6-phosphate to glucosamine-1-phosphate. In Salmonella dublin (strain CT_02021853), this protein is Phosphoglucosamine mutase.